Consider the following 289-residue polypeptide: Glycine--tRNA ligase alpha subunit (289 aa).

The protein belongs to the class-II aminoacyl-tRNA synthetase family. In terms of assembly, tetramer of two alpha and two beta subunits.

The protein resides in the cytoplasm. The catalysed reaction is tRNA(Gly) + glycine + ATP = glycyl-tRNA(Gly) + AMP + diphosphate. This is Glycine--tRNA ligase alpha subunit from Rickettsia akari (strain Hartford).